Here is a 908-residue protein sequence, read N- to C-terminus: Alanine--tRNA ligase (908 aa).

The Zn(2+) site is built by H588, H592, C691, and H695.

The protein belongs to the class-II aminoacyl-tRNA synthetase family. It depends on Zn(2+) as a cofactor.

The protein localises to the cytoplasm. The catalysed reaction is tRNA(Ala) + L-alanine + ATP = L-alanyl-tRNA(Ala) + AMP + diphosphate. Functionally, catalyzes the attachment of alanine to tRNA(Ala) in a two-step reaction: alanine is first activated by ATP to form Ala-AMP and then transferred to the acceptor end of tRNA(Ala). Also edits incorrectly charged Ser-tRNA(Ala) and Gly-tRNA(Ala) via its editing domain. The protein is Alanine--tRNA ligase of Mycobacterium leprae (strain TN).